Consider the following 810-residue polypeptide: Phenylalanine--tRNA ligase beta subunit (810 aa).

The tRNA-binding domain maps to 40–153 (KLPDQKVIVG…EACEIGQPLA (114 aa)). The B5 domain occupies 399–480 (AAQKIVSLRP…RLYGYNNLEP (82 aa)). Positions 458, 464, 467, and 468 each coordinate Mg(2+). One can recognise an FDX-ACB domain in the interval 714–808 (SKFPVVERDL…ARSELGAVIR (95 aa)).

This sequence belongs to the phenylalanyl-tRNA synthetase beta subunit family. Type 1 subfamily. Tetramer of two alpha and two beta subunits. The cofactor is Mg(2+).

The protein resides in the cytoplasm. It catalyses the reaction tRNA(Phe) + L-phenylalanine + ATP = L-phenylalanyl-tRNA(Phe) + AMP + diphosphate + H(+). The sequence is that of Phenylalanine--tRNA ligase beta subunit from Chlorobaculum tepidum (strain ATCC 49652 / DSM 12025 / NBRC 103806 / TLS) (Chlorobium tepidum).